A 368-amino-acid polypeptide reads, in one-letter code: Protein tesmin/TSO1-like CXC 8 (368 aa).

The CRC domain occupies 64 to 185; sequence KHKGCRCKQS…KCINCKNVSE (122 aa).

Belongs to the lin-54 family.

It is found in the nucleus. Functionally, plays a role in development of both male and female reproductive tissues. The polypeptide is Protein tesmin/TSO1-like CXC 8 (TCX8) (Arabidopsis thaliana (Mouse-ear cress)).